We begin with the raw amino-acid sequence, 559 residues long: MMNLQWLIPLLPLLSALLVQLFAARLGKRVAHLSVALGTLTVIVAAYQLVAYIGTDASPSWHSLGTMWGSLYVDPLSSIMSLVVAGISLIVHVYSIRYMTEEPGYPRFFLLLDLMTASILLMVAAGDLVTLLIAWHMIGIMLYFLLGQNTESWPSQRYAFWTFITYRLGDLPLVLAAVLLYQTYGAIDFPTLFSRIAADPNATIMGLPTAITAAFLVALSAFAKSAQFPLHTWLPYTMEGPTPVSALMHAGIVNAGGFIINRFAPVFVHSDGVLHMLFVVGLITALVGSVLMLTQNDIKKSLGYSTMGQMGFMVMECGLGAFSLAVFHLIAHGLFKGTMFLGSGSMIHEARKHDGVPHNPLHTFLVERKSASLKLPWLFIGLATLVVPLFILVIAHWFVAPDFFEKQGAIVLLFFGWITGVQVLFATHHLDANNPIRMMMMILLSFTLIVVGYTFIGHAFENFLYPEEAFRNALYHAAGIDKLTFDGLVFLLALIVVAGWFSSYLASREKSVFGDRFGAVRLTLYSLISREFYVADLYDRMAHWLLDASKRFNVWMRWY.

Helical transmembrane passes span 4–24 (LQWL…LFAA), 33–53 (LSVA…VAYI), 76–96 (LSSI…VYSI), 106–126 (PRFF…VAAG), 173–193 (LVLA…PTLF), 202–222 (ATIM…LSAF), 240–260 (GPTP…GFII), 273–293 (VLHM…VLML), 310–330 (MGFM…FHLI), 375–395 (LPWL…LVIA), 408–428 (GAIV…FATH), 440–460 (MMIL…GHAF), and 487–507 (GLVF…YLAS).

The protein belongs to the inorganic carbon transporter (TC 9.A.2) DabB family. In terms of assembly, forms a complex with DabA1.

The protein resides in the cell inner membrane. Its function is as follows. Part of an energy-coupled inorganic carbon pump. The sequence is that of Probable inorganic carbon transporter subunit DabB1 from Halothiobacillus neapolitanus (strain ATCC 23641 / c2) (Thiobacillus neapolitanus).